A 765-amino-acid chain; its full sequence is Multifunctional tryptophan biosynthesis protein (765 aa).

The region spanning 2 to 196 (ATLLIDNYDS…LSLRGGNWDE (195 aa)) is the Glutamine amidotransferase type-1 domain. 53–55 (GPG) is an L-glutamine binding site. The active-site Nucleophile; for GATase activity is the Cys81. Residues Gln85 and 131–132 (SL) contribute to the L-glutamine site. Catalysis depends on for GATase activity residues His170 and Glu172. An indole-3-glycerol phosphate synthase region spans residues 231 to 494 (TILSRIYAQR…NLKEFVAELL (264 aa)). The N-(5'-phosphoribosyl)anthranilate isomerase stretch occupies residues 512–765 (QVKICGISSV…VEKAKSINLQ (254 aa)).

The catalysed reaction is N-(5-phospho-beta-D-ribosyl)anthranilate = 1-(2-carboxyphenylamino)-1-deoxy-D-ribulose 5-phosphate. It carries out the reaction 1-(2-carboxyphenylamino)-1-deoxy-D-ribulose 5-phosphate + H(+) = (1S,2R)-1-C-(indol-3-yl)glycerol 3-phosphate + CO2 + H2O. The enzyme catalyses chorismate + L-glutamine = anthranilate + pyruvate + L-glutamate + H(+). Its pathway is amino-acid biosynthesis; L-tryptophan biosynthesis; L-tryptophan from chorismate: step 1/5. The protein operates within amino-acid biosynthesis; L-tryptophan biosynthesis; L-tryptophan from chorismate: step 3/5. It participates in amino-acid biosynthesis; L-tryptophan biosynthesis; L-tryptophan from chorismate: step 4/5. Trifunctional enzyme bearing the Gln amidotransferase (GATase) domain of anthranilate synthase, indole-glycerolphosphate synthase, and phosphoribosylanthranilate isomerase activities. The polypeptide is Multifunctional tryptophan biosynthesis protein (trp1) (Phycomyces blakesleeanus).